A 205-amino-acid chain; its full sequence is Adenylyl-sulfate kinase (205 aa).

35–42 (GLSGAGKS) provides a ligand contact to ATP. The active-site Phosphoserine intermediate is the S109.

The protein belongs to the APS kinase family.

The enzyme catalyses adenosine 5'-phosphosulfate + ATP = 3'-phosphoadenylyl sulfate + ADP + H(+). It functions in the pathway sulfur metabolism; hydrogen sulfide biosynthesis; sulfite from sulfate: step 2/3. Its function is as follows. Catalyzes the synthesis of activated sulfate. This chain is Adenylyl-sulfate kinase, found in Acaryochloris marina (strain MBIC 11017).